We begin with the raw amino-acid sequence, 413 residues long: Multifunctional CCA protein (413 aa).

ATP is bound by residues G8 and R11. 2 residues coordinate CTP: G8 and R11. Residues D21 and D23 each contribute to the Mg(2+) site. Positions 91, 143, and 146 each coordinate ATP. R91, R143, and R146 together coordinate CTP. An HD domain is found at 232 to 333; that stretch reads TGVHVMMVVD…VRLFERSDAL (102 aa).

This sequence belongs to the tRNA nucleotidyltransferase/poly(A) polymerase family. Bacterial CCA-adding enzyme type 1 subfamily. In terms of assembly, monomer. Can also form homodimers and oligomers. Mg(2+) is required as a cofactor. Requires Ni(2+) as cofactor.

The catalysed reaction is a tRNA precursor + 2 CTP + ATP = a tRNA with a 3' CCA end + 3 diphosphate. It carries out the reaction a tRNA with a 3' CCA end + 2 CTP + ATP = a tRNA with a 3' CCACCA end + 3 diphosphate. Functionally, catalyzes the addition and repair of the essential 3'-terminal CCA sequence in tRNAs without using a nucleic acid template. Adds these three nucleotides in the order of C, C, and A to the tRNA nucleotide-73, using CTP and ATP as substrates and producing inorganic pyrophosphate. tRNA 3'-terminal CCA addition is required both for tRNA processing and repair. Also involved in tRNA surveillance by mediating tandem CCA addition to generate a CCACCA at the 3' terminus of unstable tRNAs. While stable tRNAs receive only 3'-terminal CCA, unstable tRNAs are marked with CCACCA and rapidly degraded. This Burkholderia orbicola (strain MC0-3) protein is Multifunctional CCA protein.